A 776-amino-acid chain; its full sequence is Homoaconitase, mitochondrial (776 aa).

The transit peptide at 1-38 directs the protein to the mitochondrion; that stretch reads MQSRLVSQSGLGRRWAVLRCALSKTYQRRTLTSTRRQF. Residues Cys-394, Cys-463, and Cys-466 each contribute to the [4Fe-4S] cluster site.

The protein belongs to the aconitase/IPM isomerase family. [4Fe-4S] cluster is required as a cofactor.

It is found in the mitochondrion. It carries out the reaction (2R,3S)-homoisocitrate = cis-homoaconitate + H2O. It functions in the pathway amino-acid biosynthesis; L-lysine biosynthesis via AAA pathway; L-alpha-aminoadipate from 2-oxoglutarate: step 3/5. In terms of biological role, catalyzes the reversible hydration of cis-homoaconitate to (2R,3S)-homoisocitrate, a step in the alpha-aminoadipate pathway for lysine biosynthesis. This is Homoaconitase, mitochondrial (lys4) from Emericella nidulans (strain FGSC A4 / ATCC 38163 / CBS 112.46 / NRRL 194 / M139) (Aspergillus nidulans).